The chain runs to 314 residues: Vacuolar membrane protein SCRG_03194 (314 aa).

A disordered region spans residues 32 to 60; sequence KPTSSVVSETSSKSLPSLTSSAFSTSSGA. The helical transmembrane segment at 93–113 threads the bilayer; it reads VYIAVGAVIGAIFISILIWWL. 3 positions are modified to phosphoserine: S148, S254, and S274. The interval 240 to 309 is disordered; sequence EERKLNLNRP…PSMFLDDVLN (70 aa). The span at 254-269 shows a compositional bias: basic and acidic residues; the sequence is SPERKEKKINSMEGYH.

The protein belongs to the PRM5 family.

The protein resides in the vacuole membrane. The sequence is that of Vacuolar membrane protein SCRG_03194 from Saccharomyces cerevisiae (strain RM11-1a) (Baker's yeast).